The chain runs to 501 residues: Eukaryotic translation initiation factor 3 subunit E (501 aa).

Residues 245–423 enclose the PCI domain; sequence CDLFFYTPYL…ESIESTSTNV (179 aa). Residues serine 477 and serine 479 each carry the phosphoserine modification.

The protein belongs to the eIF-3 subunit E family. Component of the eukaryotic translation initiation factor 3 (eIF-3) complex. The eIF-3 complex appears to include tif32/eif3a, SPAC25G10.08/eif3b, tif33/eif3c, SPBC4C3.07/eif3f, tif35/eif3g and sum1/eif3i. This set of common subunits may also associate exclusively with either moe1/eif3d and int6/eif3e, or with SPAC821.05/eif3h and SPAC1751.03/eif3m. The eIF-3 complex may also include SPAC3A12.13c/eif3j. Also interacts with the proteasome via rpn501/rpn502.

It localises to the cytoplasm. Functionally, component of the eukaryotic translation initiation factor 3 (eIF-3) complex, which is involved in protein synthesis of a specialized repertoire of mRNAs and, together with other initiation factors, stimulates binding of mRNA and methionyl-tRNAi to the 40S ribosome. The eIF-3 complex specifically targets and initiates translation of a subset of mRNAs involved in cell proliferation (Potential). Required for maintaining the basal level of atf1 and for transcriptional activation of core environmental stress response genes (CESR genes) in response to histidine starvation. May positively regulate proteasome activity. Required for nuclear localization of the proteasome subunit rpn501/rpn502. This Schizosaccharomyces pombe (strain 972 / ATCC 24843) (Fission yeast) protein is Eukaryotic translation initiation factor 3 subunit E (int6).